The primary structure comprises 267 residues: Putative glycosyltransferase 63 (267 aa).

The protein belongs to the glycosyltransferase group 1 family. Glycosyltransferase 4 subfamily.

In Sulfolobus islandicus filamentous virus (isolate Iceland/Hveragerdi) (SIFV), this protein is Putative glycosyltransferase 63 (SIFV0063).